We begin with the raw amino-acid sequence, 266 residues long: 3-methyl-2-oxobutanoate hydroxymethyltransferase (266 aa).

Residues D47 and D86 each coordinate Mg(2+). Residues 47-48 (DS), D86, and K114 each bind 3-methyl-2-oxobutanoate. E116 contacts Mg(2+). Catalysis depends on E183, which acts as the Proton acceptor.

It belongs to the PanB family. Homodecamer; pentamer of dimers. The cofactor is Mg(2+).

The protein localises to the cytoplasm. It carries out the reaction 3-methyl-2-oxobutanoate + (6R)-5,10-methylene-5,6,7,8-tetrahydrofolate + H2O = 2-dehydropantoate + (6S)-5,6,7,8-tetrahydrofolate. The protein operates within cofactor biosynthesis; (R)-pantothenate biosynthesis; (R)-pantoate from 3-methyl-2-oxobutanoate: step 1/2. Functionally, catalyzes the reversible reaction in which hydroxymethyl group from 5,10-methylenetetrahydrofolate is transferred onto alpha-ketoisovalerate to form ketopantoate. The sequence is that of 3-methyl-2-oxobutanoate hydroxymethyltransferase from Idiomarina loihiensis (strain ATCC BAA-735 / DSM 15497 / L2-TR).